We begin with the raw amino-acid sequence, 216 residues long: Glycerol-3-phosphate acyltransferase (216 aa).

Transmembrane regions (helical) follow at residues 4 to 24 (TIIG…LWIG), 71 to 91 (LPFF…LAVI), 113 to 133 (VVLG…ASIL), 144 to 164 (VLSA…GFIL), and 165 to 185 (PSYD…IILR).

Belongs to the PlsY family. As to quaternary structure, probably interacts with PlsX.

It localises to the cell membrane. The catalysed reaction is an acyl phosphate + sn-glycerol 3-phosphate = a 1-acyl-sn-glycero-3-phosphate + phosphate. It participates in lipid metabolism; phospholipid metabolism. Catalyzes the transfer of an acyl group from acyl-phosphate (acyl-PO(4)) to glycerol-3-phosphate (G3P) to form lysophosphatidic acid (LPA). This enzyme utilizes acyl-phosphate as fatty acyl donor, but not acyl-CoA or acyl-ACP. This is Glycerol-3-phosphate acyltransferase from Streptococcus sanguinis (strain SK36).